A 149-amino-acid chain; its full sequence is uncharacterized protein (149 aa).

Over residues 1-11 the composition is skewed to basic and acidic residues; sequence MTKESKPDRLR. The segment at 1-20 is disordered; it reads MTKESKPDRLRQMGALNPKP.

This is an uncharacterized protein from Sinorhizobium fredii (strain NBRC 101917 / NGR234).